A 275-amino-acid chain; its full sequence is Phosphonoacetaldehyde hydrolase (275 aa).

D15 functions as the Nucleophile in the catalytic mechanism. Positions 15 and 17 each coordinate Mg(2+). The active-site Schiff-base intermediate with substrate is the K56. Residue D189 coordinates Mg(2+).

This sequence belongs to the HAD-like hydrolase superfamily. PhnX family. In terms of assembly, homodimer. It depends on Mg(2+) as a cofactor.

The catalysed reaction is phosphonoacetaldehyde + H2O = acetaldehyde + phosphate + H(+). Involved in phosphonate degradation. This chain is Phosphonoacetaldehyde hydrolase, found in Pseudomonas putida (strain W619).